The chain runs to 426 residues: Glutamyl-tRNA reductase (426 aa).

Residues 49 to 52, Ser109, 114 to 116, and Gln120 contribute to the substrate site; these read TCNR and EGQ. Cys50 functions as the Nucleophile in the catalytic mechanism. Position 189–194 (189–194) interacts with NADP(+); the sequence is GAGETG.

Belongs to the glutamyl-tRNA reductase family. Homodimer.

The catalysed reaction is (S)-4-amino-5-oxopentanoate + tRNA(Glu) + NADP(+) = L-glutamyl-tRNA(Glu) + NADPH + H(+). It participates in porphyrin-containing compound metabolism; protoporphyrin-IX biosynthesis; 5-aminolevulinate from L-glutamyl-tRNA(Glu): step 1/2. It functions in the pathway porphyrin-containing compound metabolism; chlorophyll biosynthesis. Functionally, catalyzes the NADPH-dependent reduction of glutamyl-tRNA(Glu) to glutamate 1-semialdehyde (GSA). This chain is Glutamyl-tRNA reductase, found in Chlorobium phaeobacteroides (strain BS1).